We begin with the raw amino-acid sequence, 352 residues long: Homocitrate synthase, omega subunit (352 aa).

The protein belongs to the alpha-IPM synthase/homocitrate synthase family. In terms of assembly, heterodimer of an alpha and an omega chain.

It catalyses the reaction acetyl-CoA + 2-oxoglutarate + H2O = (2R)-homocitrate + CoA + H(+). Functionally, this protein is a Fe-Mo-cofactor biosynthetic component. The chain is Homocitrate synthase, omega subunit (nifV-OMEGA) from Clostridium pasteurianum.